Here is a 361-residue protein sequence, read N- to C-terminus: Phosphoserine aminotransferase (361 aa).

L-glutamate is bound at residue arginine 42. Pyridoxal 5'-phosphate is bound by residues 76–77 (AR), tryptophan 102, threonine 153, aspartate 173, and glutamine 196. Position 197 is an N6-(pyridoxal phosphate)lysine (lysine 197). 238 to 239 (NT) is a pyridoxal 5'-phosphate binding site.

The protein belongs to the class-V pyridoxal-phosphate-dependent aminotransferase family. SerC subfamily. As to quaternary structure, homodimer. Pyridoxal 5'-phosphate is required as a cofactor.

It localises to the cytoplasm. The catalysed reaction is O-phospho-L-serine + 2-oxoglutarate = 3-phosphooxypyruvate + L-glutamate. The enzyme catalyses 4-(phosphooxy)-L-threonine + 2-oxoglutarate = (R)-3-hydroxy-2-oxo-4-phosphooxybutanoate + L-glutamate. The protein operates within amino-acid biosynthesis; L-serine biosynthesis; L-serine from 3-phospho-D-glycerate: step 2/3. It participates in cofactor biosynthesis; pyridoxine 5'-phosphate biosynthesis; pyridoxine 5'-phosphate from D-erythrose 4-phosphate: step 3/5. Its function is as follows. Catalyzes the reversible conversion of 3-phosphohydroxypyruvate to phosphoserine and of 3-hydroxy-2-oxo-4-phosphonooxybutanoate to phosphohydroxythreonine. The protein is Phosphoserine aminotransferase of Yersinia pestis bv. Antiqua (strain Angola).